Reading from the N-terminus, the 131-residue chain is Peptide methionine sulfoxide reductase MsrB (131 aa).

Residues 8–130 (LDEWRSMLDP…NSVCIDLRPR (123 aa)) enclose the MsrB domain. Zn(2+) contacts are provided by cysteine 47, cysteine 50, cysteine 96, and cysteine 99. Cysteine 119 serves as the catalytic Nucleophile.

Belongs to the MsrB Met sulfoxide reductase family. Requires Zn(2+) as cofactor.

It carries out the reaction L-methionyl-[protein] + [thioredoxin]-disulfide + H2O = L-methionyl-(R)-S-oxide-[protein] + [thioredoxin]-dithiol. This Pseudomonas putida (strain ATCC 700007 / DSM 6899 / JCM 31910 / BCRC 17059 / LMG 24140 / F1) protein is Peptide methionine sulfoxide reductase MsrB.